The sequence spans 423 residues: F-box/LRR-repeat protein 2 (423 aa).

Residues 9–55 (GLINKKLPKELLLRIFSFLDIVTLCRCAQISKAWNILALDGSNWQRV) enclose the F-box domain. LRR repeat units follow at residues 61 to 87 (QTDVEGRVVENISKRCGGFLRKLSLRG), 88 to 113 (CIGVGDSSLKTFAQNCRNIEHLNLNG), 114 to 139 (CTKITDSTCYSLSRFCSKLKHLDLTS), 140 to 165 (CVSVTNSSLKGISEGCRNLEYLNLSW), 166 to 191 (CDQITKEGIEALVRGCRGLKALLLRG), 192 to 217 (CTQLEDEALKHIQNHCHELVSLNLQS), 218 to 243 (CSRITDDGVVQICRGCHRLQALCLSG), 244 to 269 (CSNLTDASLTALGLNCPRLQVLEAAR), 270 to 295 (CSHLTDAGFTLLARNCHELEKMDLEE), 296 to 321 (CVLITDSTLVQLSIHCPKLQALSLSH), 322 to 350 (CELITDEGILHLSSSTCGHERLRVLELDN), 351 to 375 (CLLVTDASLEHLENCRGLERLELYD), and 376 to 401 (CQQVTRAGIKRMRAQLPHVKVHAYFA). Residues 80–90 (LRKLSLRGCIG) are interaction with Calmodulin. A Glycyl lysine isopeptide (Lys-Gly) (interchain with G-Cter in ubiquitin) cross-link involves residue lysine 201. The residue at position 404 (threonine 404) is a Phosphothreonine; by GSK3-beta. Cysteine 420 is lipidated: S-geranylgeranyl cysteine. A CAAX motif motif is present at residues 420 to 423 (CVIL).

As to quaternary structure, part of the SCF (SKP1-CUL1-F-box) E3 ubiquitin-protein ligase complex SCF(FBXL2) composed of CUL1, SKP1, RBX1 and FBXL2. Interacts with calmodulin; may antagonize substrate ubiquitination by SCF(FBXL2). May interact with PIK3R1. Interacts with PTPN13. Post-translationally, phosphorylated by GSK-beta (GSK3B), promoting recognition by FBXO3, leading to its ubiquitination by the SCF(FBXO3) complex. Ubiquitinated at Lys-201 by the SCF(FBXO3) complex in response to lipopolysaccharide (LPS), leading to its degradation by the proteasome.

The protein localises to the membrane. The protein operates within protein modification; protein ubiquitination. Functionally, calcium-activated substrate recognition component of the SCF (SKP1-cullin-F-box protein) E3 ubiquitin-protein ligase complex, SCF(FBXL2), which mediates the ubiquitination and subsequent proteasomal degradation of target proteins. Unlike many F-box proteins, FBXL2 does not seem to target phosphodegron within its substrates but rather calmodulin-binding motifs and is thereby antagonized by calmodulin. This is the case for the cyclins CCND2 and CCND3 which polyubiquitination and subsequent degradation are inhibited by calmodulin. Through CCND2 and CCND3 degradation induces cell-cycle arrest in G(0). SCF(FBXL2) also mediates PIK3R2 ubiquitination and proteasomal degradation thereby regulating phosphatidylinositol 3-kinase signaling and autophagy. PCYT1A monoubiquitination by SCF(FBXL2) and subsequent degradation regulates synthesis of phosphatidylcholine, which is utilized for formation of membranes and of pulmonary surfactant. The SCF(FBXL2) complex acts as a regulator of inflammation by mediating ubiquitination and degradation of TRAF proteins (TRAF1, TRAF2, TRAF3, TRAF4, TRAF5 and TRAF6). The SCF(FBXL2) complex acts as a negative regulator of the NLRP3 inflammasome by mediating ubiquitination and degradation of NLRP3. This is F-box/LRR-repeat protein 2 from Mus musculus (Mouse).